Reading from the N-terminus, the 102-residue chain is Small ribosomal subunit protein uS10 (102 aa).

The protein belongs to the universal ribosomal protein uS10 family. As to quaternary structure, part of the 30S ribosomal subunit.

In terms of biological role, involved in the binding of tRNA to the ribosomes. In Thermoanaerobacter pseudethanolicus (strain ATCC 33223 / 39E) (Clostridium thermohydrosulfuricum), this protein is Small ribosomal subunit protein uS10.